A 60-amino-acid polypeptide reads, in one-letter code: Large ribosomal subunit protein bL32 (60 aa).

The protein belongs to the bacterial ribosomal protein bL32 family.

The polypeptide is Large ribosomal subunit protein bL32 (Borrelia duttonii (strain Ly)).